Reading from the N-terminus, the 385-residue chain is Selenoprotein P (385 aa).

Positions 1–19 (MWRSLGLALALCLLPYGGA) are cleaved as a signal peptide. Selenocysteine 59 is a non-standard amino acid (selenocysteine). The cysteinyl-selenocysteine (Sec-Cys); in isoform Se-P1 cross-link spans 59-62 (UYLC). 3 N-linked (GlcNAc...) asparagine glycosylation sites follow: asparagine 83, asparagine 174, and asparagine 188. Disulfide bonds link cysteine 168/cysteine 186 and cysteine 172/cysteine 175. Positions 196–262 (KTTEPSEEHN…KGQHRQGHLE (67 aa)) are disordered. A compositionally biased stretch (basic residues) spans 243–258 (LHHHHHHHKHKGQHRQ). Position 264 (selenocysteine 264) is a non-standard amino acid, selenocysteine. At serine 269 the chain carries Phosphoserine. 4 non-standard amino acids (selenocysteine) are found at residues selenocysteine 282, selenocysteine 323, selenocysteine 335, and selenocysteine 357. Residues 357-385 (UHSQHVSPTEASPNUSUNNKTKKUKUNLN) form a disordered region. Residues 360-369 (QHVSPTEASP) are compositionally biased toward polar residues. Threonine 365 is a glycosylation site (O-linked (Hex...) threonine; partial). 4 non-standard amino acids (selenocysteine) are found at residues selenocysteine 371, selenocysteine 373, selenocysteine 380, and selenocysteine 382. Residues 376 to 385 (KTKKUKUNLN) show a composition bias toward basic residues.

This sequence belongs to the selenoprotein P family. In terms of processing, isoform Se-P1 contains several disulfide bridges and a selenide-sulfide bond between Sec-59 and Cys-62. These bonds are speculated to serve as redox-active pairs. Post-translationally, phosphorylation sites are present in the extracellular medium. In terms of tissue distribution, widely expressed, mainly by the liver. Secreted in plasma.

It is found in the secreted. Its function is as follows. Might be responsible for some of the extracellular antioxidant defense properties of selenium or might be involved in the transport of selenium. May supply selenium to tissues such as brain and testis. In Rattus norvegicus (Rat), this protein is Selenoprotein P.